Reading from the N-terminus, the 149-residue chain is Probable cyclic pyranopterin monophosphate synthase (149 aa).

Substrate is bound by residues 67–69 and 103–104; these read LCH and ME. Residue D118 is part of the active site.

The protein belongs to the MoaC family. Homohexamer; trimer of dimers.

The catalysed reaction is (8S)-3',8-cyclo-7,8-dihydroguanosine 5'-triphosphate = cyclic pyranopterin phosphate + diphosphate. It participates in cofactor biosynthesis; molybdopterin biosynthesis. Its function is as follows. Catalyzes the conversion of (8S)-3',8-cyclo-7,8-dihydroguanosine 5'-triphosphate to cyclic pyranopterin monophosphate (cPMP). The chain is Probable cyclic pyranopterin monophosphate synthase from Saccharolobus solfataricus (strain ATCC 35092 / DSM 1617 / JCM 11322 / P2) (Sulfolobus solfataricus).